We begin with the raw amino-acid sequence, 156 residues long: MGFERTSSSLSLLSSSLPSSLQPSENTRAKFSLFYLLLLFFVLCVIATFTITPTSTSSPYNRNSNSGTLGNFYAKEEGKSTVVIKKTRKIGDRSKEAELRRILRGLGSSPPRCSSKCGRCTPCKPVHVPVPPGTPVTAEYYPEAWRCKCGNKLYMP.

The signal sequence occupies residues 1-47 (MGFERTSSSLSLLSSSLPSSLQPSENTRAKFSLFYLLLLFFVLCVIA). 3 disulfide bridges follow: Cys113–Cys147, Cys117–Cys123, and Cys120–Cys149.

This sequence belongs to the plant cysteine rich small secretory peptide family. Epidermal patterning factor subfamily. Interacts with ERECTA. Expressed in the internal layers of the root, hypocotyl and stems, and in the midrib of developing rosette leaves. Detected in a ring of cells surrounding the vascular elements. Expressed in developing stems soon after bolting, in inflorescence stems, near the root apex and in the chalazal region of ovules. Not found in cotyledons or in stomatal precursors or stomata.

Its subcellular location is the secreted. In terms of biological role, acts primarily as positive regulator of inflorescence growth. Endodermal expression is sufficient for proper inflorescence architecture. Redundantly involved with EPFL4 in procambial development regulation. Also acts as tissue-specific regulator of epidermal pattern. Controls stomatal patterning by repressing stomatal production. TMM (AC Q9SSD1) functions to dampen or block CHAL signaling. Not processed by SDD1 (AC O64495). Acts as growth-regulatory ligand for ERECTA family receptors. This Arabidopsis thaliana (Mouse-ear cress) protein is EPIDERMAL PATTERNING FACTOR-like protein 6.